The chain runs to 308 residues: Uridylate cyclase (308 aa).

The Mn(2+) site is built by Asp62 and Asp106.

It belongs to the adenylyl cyclase class-4/guanylyl cyclase family. Pyrimidine cyclase subfamily. As to quaternary structure, homodimer. The cofactor is Mn(2+).

The protein resides in the cytoplasm. It carries out the reaction GTP = 3',5'-cyclic GMP + diphosphate. It catalyses the reaction UTP = 3',5'-cyclic UMP + diphosphate. Functionally, pycsar (pyrimidine cyclase system for antiphage resistance) provides immunity against bacteriophage. The pyrimidine cyclase (PycC) synthesizes cyclic nucleotides in response to infection; these serve as specific second messenger signals. The signals activate the adjacent effector, leading to bacterial cell death and abortive phage infection. A clade D Pycsar system. In terms of biological role, the pyrimidine cyclase gene of a two-gene Pycsar system, generates cyclic UMP (cUMP) from UTP as well as cGMP from GTP to a lesser extent, has little to no activity on ATP or CTP. Expression of this and adjacent effector PtPycTM (AC A0A4Q9KQH5) probably confers resistance to bacteriophage. The genes are probably only expressed in response to bacteriophage infection. The sequence is that of Uridylate cyclase from Propioniciclava tarda.